The following is an 80-amino-acid chain: Probable small nuclear ribonucleoprotein G (80 aa).

The region spanning 5 to 76 is the Sm domain; it reads GQPPDLKKYM…IVTVEALEPV (72 aa).

It belongs to the snRNP Sm proteins family.

It is found in the nucleus. In terms of biological role, probable common Sm protein, is found in U1 and U2 snRNPs and may be part of the spliceosome. The polypeptide is Probable small nuclear ribonucleoprotein G (Arabidopsis thaliana (Mouse-ear cress)).